Here is a 933-residue protein sequence, read N- to C-terminus: Myocardin (933 aa).

The MEF2C-binding motif lies at 12–27 (IRSKFRSVLQLRLQQR). RPEL repeat units follow at residues 18–43 (SVLQ…PPLR), 62–87 (DTLK…QASS), and 106–131 (DDLN…PVDC). Positions 153 to 205 (FEEDSSSDGLSPDQTRSEDLPGSAGSPLDTKAAETPLAGPRGTVQDLTLGSEN) are HDAC5-binding. Disordered stretches follow at residues 154–282 (EEDS…PPPM) and 324–365 (NEQM…GPLP). Residues 210 to 220 (SAPQSGNQSDL) are compositionally biased toward polar residues. Over residues 248–265 (NRHKKPKDPKPKVKKLKY) the composition is skewed to basic residues. Low complexity predominate over residues 330–346 (NPNSSSAPLSSTPLSPA). Positions 347-357 (KNSFSGQTGVS) are enriched in polar residues. One can recognise an SAP domain in the interval 368-402 (LDDLKVSELRQQLRIRGLPVSGTKTALMDRLRPFQ). 4 positions are modified to phosphoserine; by GSK3-beta: serine 445, serine 449, serine 453, and serine 457. The stretch at 515–550 (LVEKQKVINELTWKLQQEQRQVEELRMQLQKQKRGT) forms a coiled coil. A disordered region spans residues 568 to 613 (DAGSSCPFAPLPRAVKRQSNSSEEQPAAGDAARLRPLGNTHCAESS). Phosphoserine; by GSK3-beta is present on residues serine 621, serine 625, serine 629, and serine 633. Disordered stretches follow at residues 630–672 (PQHS…VSSP) and 760–794 (PKIP…FDHY). A required for interaction with and ubiquitination by STUB1 region spans residues 712-933 (ITQPPSYEDA…SPMDLHLQQW (222 aa)). Phosphoserine; by MAPK1 and MAPK3 occurs at positions 810, 857, and 864. Position 891 is a phosphothreonine; by MAPK1 and MAPK3 (threonine 891).

As to quaternary structure, homodimer. Interacts with MLLT7/FOXO4. Interacts with SRF, its association does not depend on specific DNA sequences for ternary complex formation. Interacts (via C-terminal) with EP300 (via the CREB-binding domain). Interacts with HDAC4 and HDAC5. Interacts with MEF2C. Interacts (via C-terminus) with STUB1/CHIP. Interacts with PURB. In terms of processing, ubiquitinated; by STUB1/CHIP at the C-terminus, leading to its degradation by the proteasome. Phosphorylation by GSK3B is required for STUB1/CHIP-mediated ubiquitination. Phosphorylation negatively regulates the intrinsic myocardin transcriptional activity. Phosphorylated; by GSK3B. In terms of tissue distribution, expressed in the heart and in smooth muscle cells-containing tissues (aorta, pulmonary vein, lung), but is not detectable in skeletal muscle, liver, kidney and spleen.

The protein localises to the nucleus. In terms of biological role, smooth muscle cells (SM) and cardiac muscle cells-specific transcriptional factor which uses the canonical single or multiple CArG boxes DNA sequence. Acts as a cofactor of serum response factor (SRF) with the potential to modulate SRF-target genes. Plays a crucial role in cardiogenesis, urinary bladder development, and differentiation of the smooth muscle cell lineage (myogenesis). Positively regulates the transcription of genes involved in vascular smooth muscle contraction. The sequence is that of Myocardin (MYOCD) from Sus scrofa (Pig).